Reading from the N-terminus, the 562-residue chain is NAD-dependent malic enzyme (562 aa).

The active-site Proton donor is the tyrosine 101. Arginine 154 lines the NAD(+) pocket. Lysine 172 serves as the catalytic Proton acceptor. Positions 243, 244, and 267 each coordinate a divalent metal cation. Residues aspartate 267 and asparagine 415 each contribute to the NAD(+) site.

The protein belongs to the malic enzymes family. In terms of assembly, homotetramer. Mg(2+) serves as cofactor. The cofactor is Mn(2+).

It catalyses the reaction (S)-malate + NAD(+) = pyruvate + CO2 + NADH. The enzyme catalyses oxaloacetate + H(+) = pyruvate + CO2. In Vibrio parahaemolyticus serotype O3:K6 (strain RIMD 2210633), this protein is NAD-dependent malic enzyme.